A 455-amino-acid chain; its full sequence is Pup--protein ligase (455 aa).

E10 serves as a coordination point for Mg(2+). R55 contacts ATP. A Mg(2+)-binding site is contributed by Y57. The active-site Proton acceptor is the D59. E65 contributes to the Mg(2+) binding site. ATP-binding residues include T68 and W422.

It belongs to the Pup ligase/Pup deamidase family. Pup-conjugating enzyme subfamily.

The catalysed reaction is ATP + [prokaryotic ubiquitin-like protein]-L-glutamate + [protein]-L-lysine = ADP + phosphate + N(6)-([prokaryotic ubiquitin-like protein]-gamma-L-glutamyl)-[protein]-L-lysine.. The protein operates within protein degradation; proteasomal Pup-dependent pathway. It participates in protein modification; protein pupylation. In terms of biological role, catalyzes the covalent attachment of the prokaryotic ubiquitin-like protein modifier Pup to the proteasomal substrate proteins, thereby targeting them for proteasomal degradation. This tagging system is termed pupylation. The ligation reaction involves the side-chain carboxylate of the C-terminal glutamate of Pup and the side-chain amino group of a substrate lysine. The chain is Pup--protein ligase from Sanguibacter keddieii (strain ATCC 51767 / DSM 10542 / NCFB 3025 / ST-74).